The chain runs to 292 residues: Elongation factor Ts (292 aa).

The interval 79–82 (TDFV) is involved in Mg(2+) ion dislocation from EF-Tu.

It belongs to the EF-Ts family.

The protein resides in the cytoplasm. Associates with the EF-Tu.GDP complex and induces the exchange of GDP to GTP. It remains bound to the aminoacyl-tRNA.EF-Tu.GTP complex up to the GTP hydrolysis stage on the ribosome. This is Elongation factor Ts from Staphylococcus epidermidis (strain ATCC 12228 / FDA PCI 1200).